The sequence spans 639 residues: MESDATTSEPKASVGSDSSPAEQTVLATLRDSVAAPTRGFMSPVRSVVASPRPVKGKAARRRLQLPPVTQAETCDEEPVPAVPEDQEEAQPLPPIYASPMRGMWRSEKVALYCDQVLQGSKAEDAEEAMSRYLLEKLKAKDRWLGVWKSNPELFFEKYEEASIPFVGILVEVTCKPRQNLSSCFKVTVSVAEPFSSNIANIPRDLVDEVLGELEYSAPLLEVYPVDGQDADVRDIALALEVVRFFYDFLWRDWDDEENCENYTALIEERINLWCDIQDGTIPGPIAQRFKKTLEKYKNKRVELIEYQSNIKEDPSAAEAVECWKKYYEIVMLCGLLKMWEDLRLRVHGPFFPRILRRRKGKRDFGKTITHIVAKVMTTDMVKNLSSDTLLQQHNDLNLALDSCYSGDIVVIFPGEYQASNLALLTDDITIKGVGKREEIMITSEPSHDSFVVSKADNVKLMQLSLIQQGTVDGIVVVESGHLTLENCLLKCEGTGVCVLTGASLTITNSEITGAQGAGVELYPGSIAILEGNEIHHCNNLRTSDSSKSTLGGVNMKVLPAPKLKMTNNHIYNNNGYGVSILQPSEQFFIVAEAALNKGAASGDKKDDKMLSKVMQTLNVEMNNNRIEANLKGDIRIVTG.

2 disordered regions span residues 1–25 (MESD…EQTV) and 48–75 (VASP…ETCD). Ser-3 is subject to O-acetylserine. Phosphoserine occurs at positions 8, 19, and 50. The segment covering 54-63 (VKGKAARRRL) has biased composition (basic residues). Positions 285–312 (IAQRFKKTLEKYKNKRVELIEYQSNIKE) form a coiled coil. PbH1 repeat units follow at residues 479 to 500 (SGHL…CVLT), 501 to 523 (GASL…ELYP), 524 to 557 (GSIA…NMKV), and 560 to 582 (APKL…SILQ). Lys-556 carries the N6-acetyllysine modification. Lys-631 carries the post-translational modification N6-acetyllysine.

Interacts with HSPA2; this interaction may promote the recruitment of HSPA2 to the spindle. As to expression, expressed in pachytene spermatocytes and elongating spermatids inside the seminiferous tubules. Not detected in ovary (at protein level). Testis-specific.

Its subcellular location is the cytoplasm. The protein resides in the cytoskeleton. It is found in the spindle. Its function is as follows. Testis-specific spindle-associated factor that plays a role in spermatogenesis. In association with HSPA2, participates in the maintenance of spindle integrity during meiosis in male germ cells. This chain is Testicular spindle-associated protein SHCBP1L, found in Mus musculus (Mouse).